We begin with the raw amino-acid sequence, 247 residues long: uncharacterized protein (247 aa).

An N-acetyltransferase domain is found at 102 to 247 (RSIMSRTNDN…ISEHHYRIKR (146 aa)).

The protein belongs to the acetyltransferase family.

This is an uncharacterized protein from Bacillus subtilis (strain 168).